The primary structure comprises 325 residues: MKYTFNEEKAFDIVAIGRACIDLNAVEYNRPMEETMTFSKYVGGSPANIAIGSAKLGLKAGFIGKIPDDQHGRFIESYMRKTGVDTTQMIVDQDGHKAGLAFTEILSPEECSILMYRDDVADLYLEPSEVSEDYIANAKMLLVSGTALAKSPSREAVLKAVQYAKKHQVKVVFELDYRPYTWQSSDETAVYYSLVAEQSDIVIGTRDEFDVMENRTGGSNEESVNHLFGHSADLVVIKHGVEGSYAYSKSGEVFRAQAYKTKVLKTFGAGDSYASAFIYGLVSGKDIETALKYGSASASIVVSKHSSSEAMPTAEEIEQLIEAQS.

Belongs to the carbohydrate kinase PfkB family.

It catalyses the reaction 5-dehydro-2-deoxy-D-gluconate + ATP = 6-phospho-5-dehydro-2-deoxy-D-gluconate + ADP + H(+). It functions in the pathway polyol metabolism; myo-inositol degradation into acetyl-CoA; acetyl-CoA from myo-inositol: step 5/7. Its function is as follows. Catalyzes the phosphorylation of 5-dehydro-2-deoxy-D-gluconate (2-deoxy-5-keto-D-gluconate or DKG) to 6-phospho-5-dehydro-2-deoxy-D-gluconate (DKGP). The polypeptide is 5-dehydro-2-deoxygluconokinase (iolC) (Bacillus subtilis (strain 168)).